The sequence spans 414 residues: CCA-adding enzyme (414 aa).

The ATP site is built by glycine 8 and arginine 11. 2 residues coordinate CTP: glycine 8 and arginine 11. The Mg(2+) site is built by aspartate 21 and aspartate 23. Arginine 92, arginine 138, and arginine 141 together coordinate ATP. Positions 92, 138, and 141 each coordinate CTP.

Belongs to the tRNA nucleotidyltransferase/poly(A) polymerase family. Bacterial CCA-adding enzyme type 2 subfamily. It depends on Mg(2+) as a cofactor.

The enzyme catalyses a tRNA precursor + 2 CTP + ATP = a tRNA with a 3' CCA end + 3 diphosphate. The catalysed reaction is a tRNA with a 3' CCA end + 2 CTP + ATP = a tRNA with a 3' CCACCA end + 3 diphosphate. In terms of biological role, catalyzes the addition and repair of the essential 3'-terminal CCA sequence in tRNAs without using a nucleic acid template. Adds these three nucleotides in the order of C, C, and A to the tRNA nucleotide-73, using CTP and ATP as substrates and producing inorganic pyrophosphate. tRNA 3'-terminal CCA addition is required both for tRNA processing and repair. Also involved in tRNA surveillance by mediating tandem CCA addition to generate a CCACCA at the 3' terminus of unstable tRNAs. While stable tRNAs receive only 3'-terminal CCA, unstable tRNAs are marked with CCACCA and rapidly degraded. This chain is CCA-adding enzyme, found in Buchnera aphidicola subsp. Cinara cedri (strain Cc).